A 326-amino-acid polypeptide reads, in one-letter code: Beta-ketoacyl-[acyl-carrier-protein] synthase III (326 aa).

Catalysis depends on residues C113 and H253. Residues 254-258 (QANIR) form an ACP-binding region. N283 is an active-site residue.

The protein belongs to the thiolase-like superfamily. FabH family. As to quaternary structure, homodimer.

The protein resides in the cytoplasm. It catalyses the reaction malonyl-[ACP] + acetyl-CoA + H(+) = 3-oxobutanoyl-[ACP] + CO2 + CoA. It participates in lipid metabolism; fatty acid biosynthesis. In terms of biological role, catalyzes the condensation reaction of fatty acid synthesis by the addition to an acyl acceptor of two carbons from malonyl-ACP. Catalyzes the first condensation reaction which initiates fatty acid synthesis and may therefore play a role in governing the total rate of fatty acid production. Possesses both acetoacetyl-ACP synthase and acetyl transacylase activities. Its substrate specificity determines the biosynthesis of branched-chain and/or straight-chain of fatty acids. The chain is Beta-ketoacyl-[acyl-carrier-protein] synthase III from Wolbachia sp. subsp. Brugia malayi (strain TRS).